The primary structure comprises 218 residues: Large ribosomal subunit protein uL3 (218 aa).

Belongs to the universal ribosomal protein uL3 family. Part of the 50S ribosomal subunit. Forms a cluster with proteins L14 and L19.

Its function is as follows. One of the primary rRNA binding proteins, it binds directly near the 3'-end of the 23S rRNA, where it nucleates assembly of the 50S subunit. This chain is Large ribosomal subunit protein uL3, found in Corynebacterium glutamicum (strain R).